A 428-amino-acid chain; its full sequence is UPF0761 membrane protein TERTU_3006 (428 aa).

7 consecutive transmembrane segments (helical) span residues 47–67 (LFALVPLMTVTYTMFSAIPAF), 104–124 (LSGVGVVMLLVTAYLMLRNIE), 143–163 (YLLYWAILSVGPILVAAAFLL), 189–209 (VVPWALTSAAFTLLFVAVPNC), 218–238 (IGGVITAFAFEVVKAVFGYIV), 248–268 (GAFAVVPLFLLWVNLLWTIIL), and 292–312 (MIVVLICLALFREKAALGESV).

The protein belongs to the UPF0761 family.

It localises to the cell inner membrane. The protein is UPF0761 membrane protein TERTU_3006 of Teredinibacter turnerae (strain ATCC 39867 / T7901).